A 562-amino-acid chain; its full sequence is Tetratricopeptide repeat protein 34 (562 aa).

Residues 1–30 are disordered; it reads MLHKKPQRANENGISQRKKPSDQDNSSVKE. Positions 19–30 are enriched in basic and acidic residues; it reads KPSDQDNSSVKE. TPR repeat units follow at residues 51–84, 175–208, 210–242, 304–337, 388–421, 423–455, 461–494, and 509–542; these read DVSRILCTDALYQLDRIEEAHKMLSLALSNSSQR, KDSLLARARCYGQLGQKKTAIFDFNAILKDEPYN, EALSGKGFMHLTLNQQKEAVHDICLAIKADASY, AHFHILYTDILIAKEKYDEAFNYLRKSFNGNAID, FQAAGQEGNSLIQENQHEKALDYYSLAVISSNNN, KYLRQRAMCLTHLRDYSSAIKDIDKAILRHSSH, AEDYCSKGHILLLSCDEDAATTQYMKAISMEHAS, and AGIFSQVANRYFEQRLFEESWKMSECGLLIDENN.

The polypeptide is Tetratricopeptide repeat protein 34 (ttc34) (Xenopus laevis (African clawed frog)).